We begin with the raw amino-acid sequence, 256 residues long: Small ribosomal subunit protein eS1 (256 aa).

The segment covering 1 to 18 has biased composition (basic residues); sequence MAVGKNKRLSKGKKGLKK. Residues 1-20 form a disordered region; that stretch reads MAVGKNKRLSKGKKGLKKKA. Alanine 2 carries the post-translational modification N-acetylalanine; partial.

It belongs to the eukaryotic ribosomal protein eS1 family. As to quaternary structure, component of the small ribosomal subunit. Mature ribosomes consist of a small (40S) and a large (60S) subunit. The 40S subunit contains about 33 different proteins and 1 molecule of RNA (18S). The 60S subunit contains about 49 different proteins and 3 molecules of RNA (25S, 5.8S and 5S).

The protein resides in the cytoplasm. The sequence is that of Small ribosomal subunit protein eS1 from Podospora anserina (strain S / ATCC MYA-4624 / DSM 980 / FGSC 10383) (Pleurage anserina).